The chain runs to 187 residues: Elongation factor P (187 aa).

It belongs to the elongation factor P family.

It localises to the cytoplasm. It functions in the pathway protein biosynthesis; polypeptide chain elongation. Involved in peptide bond synthesis. Stimulates efficient translation and peptide-bond synthesis on native or reconstituted 70S ribosomes in vitro. Probably functions indirectly by altering the affinity of the ribosome for aminoacyl-tRNA, thus increasing their reactivity as acceptors for peptidyl transferase. The sequence is that of Elongation factor P (efp) from Mycobacterium bovis (strain ATCC BAA-935 / AF2122/97).